A 430-amino-acid polypeptide reads, in one-letter code: Enolase (430 aa).

Glutamine 167 provides a ligand contact to (2R)-2-phosphoglycerate. The active-site Proton donor is the glutamate 209. Residues aspartate 245, glutamate 286, and aspartate 313 each coordinate Mg(2+). 4 residues coordinate (2R)-2-phosphoglycerate: lysine 338, arginine 367, serine 368, and lysine 389. Lysine 338 functions as the Proton acceptor in the catalytic mechanism.

It belongs to the enolase family. Mg(2+) serves as cofactor.

It is found in the cytoplasm. It localises to the secreted. The protein localises to the cell surface. It catalyses the reaction (2R)-2-phosphoglycerate = phosphoenolpyruvate + H2O. The protein operates within carbohydrate degradation; glycolysis; pyruvate from D-glyceraldehyde 3-phosphate: step 4/5. Catalyzes the reversible conversion of 2-phosphoglycerate (2-PG) into phosphoenolpyruvate (PEP). It is essential for the degradation of carbohydrates via glycolysis. The polypeptide is Enolase (Synechococcus sp. (strain CC9605)).